A 964-amino-acid chain; its full sequence is MKLKKLYIFYFDIYEYFLCDLQLSETNEILKYIKNNIDKYTNSFNSSYIILKDFNIITNEVELQSYYNFTEDSKIKLNNTDLILFMTPYKIERIYSKYNRNFNQYRWFYILNNIEPAGSYKINMSNLQNINIYDKNKTAYYCKNPKLLFLTPIEIDKFIPVSRVSIDIECQHFGEFPTPNKFPISHICIDWFMESNINPVKKIITLINYEIIKNYKGEQKDRFIYTEIDELLTKDKVYITIYCTEKYMLHFILYTLRKDFDYILTYNGHSFDFTYIQGRRKFYNLNELCLVNAHKSNELKIYSYNKDTTYEIDSNNGIIFLDLYNYIKKIYNYNSYKLGEIAKERFNILSKIIDNGDEYIIMPLDTADNKNKVSIFYDVIRTANYCFINNIPYKIKDKTKIINDKEKLYDPISIENSLYQQFKIYKNNTPISDETTKVMLSKDDVDIGNKNAYVNFTKDKSDDIAYYCTHDTVLCNCIFKYDMIHDKVIAFSNEYLLPQYMSFKYKSTTNISGLLLKTLFCNRSMIVSGNLEFEKFEGGYVLEPKQKYIDSITAVFDFNSEYPSNIIEANLSPEKVEKVIKLQDDEYAVDIVENYLKEKYPYPDYCYMLIKKDKTYKFIVMDRRKPGIITQMIDKGMKSKNEYKNLKNINKNNPVLYNYYTSALYSKKITINSLYGLLGSERFDFNSPYCAEYCTALGQKCIKYIKNLVDKSRYIDNNLYLNEQNNPFSNEPVITRYSGNLDVNFTFYIIYGDTDSLFINIKFDNKFDNKEDLVNKSHECFQFLSNIINDEKNIILSKNFNFEYEKMYIWMLLLAKKKYIGEVVSSMNPLQLISDSKGTALIRRDCTEIHKTILKNTIDILKEYLTNNCTIQDVNNKINNYLMFTFKNIIENIQNLDINEFKKSVKYTGIYKDPNFYIELCVKKYNSKNPNDKIVKGQRFDFIYAHEIDIWDIETKKWNTKYTS.

It belongs to the DNA polymerase type-B family.

The enzyme catalyses DNA(n) + a 2'-deoxyribonucleoside 5'-triphosphate = DNA(n+1) + diphosphate. In terms of biological role, catalyzes DNA synthesis. This is DNA polymerase (POL) from Choristoneura biennis entomopoxvirus (CbEPV).